Reading from the N-terminus, the 181-residue chain is Inorganic pyrophosphatase (181 aa).

Substrate is bound by residues Lys-16, Arg-30, and Tyr-42. The Mg(2+) site is built by Asp-52, Asp-57, and Asp-89. Residue Tyr-126 participates in substrate binding.

The protein belongs to the PPase family. In terms of assembly, homohexamer. Mg(2+) is required as a cofactor.

The protein resides in the cytoplasm. The catalysed reaction is diphosphate + H2O = 2 phosphate + H(+). In terms of biological role, catalyzes the hydrolysis of inorganic pyrophosphate (PPi) forming two phosphate ions. The protein is Inorganic pyrophosphatase of Ureaplasma parvum serovar 3 (strain ATCC 700970).